The sequence spans 338 residues: MTLTFKPLESYREDFSFRNSPAAIARFPFPFPEDQYMYSVNLEPAVSRDPGSVFEHQFDVDEHYVSEMAERARVLELDPGRCLVMPHMAQAAWDTLAMLMEHLARDYPQHFRLTRQGDAWHWQNLALGIDQRFTFGDPASLPCEPLEYITRQMQGDFAVLDQRDGDLFMDAGMVTCPADWSLRFDAGMSFKQWHSPVPMAHQMGVFDRALKYLLNIQVGAPVRRLNWTLTINPRLDTSPETYHEWGNDRGKVTPDNVGRLVHLRVELQLMARLPRSNALLFGIRTYLISLDELVSNPAWAQRLHRVMRDLPDPIADYKGITRYRQTLVDWLRRFDPEA.

Positions 38 and 194 each coordinate heme b. Arginine 224 functions as the Proton donor in the catalytic mechanism. Asparagine 226 serves as a coordination point for heme b. Glutamate 266 lines the dimethylamine pocket. The heme b site is built by tyrosine 317 and lysine 318.

As to quaternary structure, the heme-dependent oxidative N-demethylase (HODM) is a heterotetramer composed of a catalytic alpha subunit, a FMN/2Fe-2S-dependent oxidoreductase beta subunit, a gamma subunit with putative aminotransferase activity, and a delta subunit of unknown function.

The enzyme catalyses dimethylamine + NADPH + O2 + H(+) = methylamine + formaldehyde + NADP(+) + H2O. Functionally, component of the heme-dependent oxidative N-demethylase (HODM) enzyme, that catalyzes the NADPH-dependent oxidation of dimethylamine (DMA) to methylamine (MA) and formaldehyde. Functions in bacterial methylated amine catabolism, linking alkylamine oxidation to the tetrahydrofolate C1 pool. The alpha subunit of HODM binds heme, oxygen and DMA, and serves as the site of the oxidative N-demethylase activity. The polypeptide is Heme-dependent oxidative N-demethylase alpha subunit (Ectopseudomonas mendocina (strain ymp) (Pseudomonas mendocina)).